The primary structure comprises 215 residues: Cytochrome c biogenesis ATP-binding export protein CcmA (215 aa).

An ABC transporter domain is found at 3–215; it reads LEAENLAGER…MAAFSVEDIA (213 aa). 35 to 42 contributes to the ATP binding site; sequence GPNGSGKS.

Belongs to the ABC transporter superfamily. CcmA exporter (TC 3.A.1.107) family. The complex is composed of two ATP-binding proteins (CcmA) and two transmembrane proteins (CcmB).

The protein resides in the cell inner membrane. It carries out the reaction heme b(in) + ATP + H2O = heme b(out) + ADP + phosphate + H(+). Its function is as follows. Part of the ABC transporter complex CcmAB involved in the biogenesis of c-type cytochromes; once thought to export heme, this seems not to be the case, but its exact role is uncertain. Responsible for energy coupling to the transport system. The polypeptide is Cytochrome c biogenesis ATP-binding export protein CcmA (Brucella abortus (strain 2308)).